The sequence spans 319 residues: Methionyl-tRNA formyltransferase (319 aa).

Residue 112–115 (SLLP) participates in (6S)-5,6,7,8-tetrahydrofolate binding.

Belongs to the Fmt family.

The enzyme catalyses L-methionyl-tRNA(fMet) + (6R)-10-formyltetrahydrofolate = N-formyl-L-methionyl-tRNA(fMet) + (6S)-5,6,7,8-tetrahydrofolate + H(+). Its function is as follows. Attaches a formyl group to the free amino group of methionyl-tRNA(fMet). The formyl group appears to play a dual role in the initiator identity of N-formylmethionyl-tRNA by promoting its recognition by IF2 and preventing the misappropriation of this tRNA by the elongation apparatus. This is Methionyl-tRNA formyltransferase from Pelobacter propionicus (strain DSM 2379 / NBRC 103807 / OttBd1).